Here is a 273-residue protein sequence, read N- to C-terminus: Dermonecrotic toxin LarSicTox-alphaIB1aii (273 aa).

His5 is an active-site residue. Mg(2+) is bound by residues Glu25 and Asp27. His41 serves as the catalytic Nucleophile. 2 disulfides stabilise this stretch: Cys45-Cys51 and Cys47-Cys190. Position 85 (Asp85) interacts with Mg(2+). An N-linked (GlcNAc...) asparagine glycan is attached at Asn250.

The protein belongs to the arthropod phospholipase D family. Class II subfamily. The cofactor is Mg(2+). In terms of tissue distribution, expressed by the venom gland.

The protein localises to the secreted. It carries out the reaction an N-(acyl)-sphingosylphosphocholine = an N-(acyl)-sphingosyl-1,3-cyclic phosphate + choline. It catalyses the reaction an N-(acyl)-sphingosylphosphoethanolamine = an N-(acyl)-sphingosyl-1,3-cyclic phosphate + ethanolamine. The enzyme catalyses a 1-acyl-sn-glycero-3-phosphocholine = a 1-acyl-sn-glycero-2,3-cyclic phosphate + choline. The catalysed reaction is a 1-acyl-sn-glycero-3-phosphoethanolamine = a 1-acyl-sn-glycero-2,3-cyclic phosphate + ethanolamine. Functionally, dermonecrotic toxins cleave the phosphodiester linkage between the phosphate and headgroup of certain phospholipids (sphingolipid and lysolipid substrates), forming an alcohol (often choline) and a cyclic phosphate. This toxin acts on sphingomyelin (SM). It may also act on ceramide phosphoethanolamine (CPE), lysophosphatidylcholine (LPC) and lysophosphatidylethanolamine (LPE), but not on lysophosphatidylserine (LPS), and lysophosphatidylglycerol (LPG). It acts by transphosphatidylation, releasing exclusively cyclic phosphate products as second products. Induces dermonecrosis, hemolysis, increased vascular permeability, edema, inflammatory response, and platelet aggregation. This is Dermonecrotic toxin LarSicTox-alphaIB1aii from Loxosceles arizonica (Arizona brown spider).